We begin with the raw amino-acid sequence, 320 residues long: Chorion protein S36 (320 aa).

The signal sequence occupies residues methionine 1 to alanine 18. 5 consecutive repeat copies span residues alanine 178–valine 181, alanine 258–alanine 261, alanine 266–alanine 269, alanine 274–alanine 277, and alanine 290. Residues alanine 259–tyrosine 320 form a disordered region.

The protein belongs to the chorion protein S36 family.

The protein localises to the secreted. Its function is as follows. Chorion membrane (egg shell) protein; plays a role in protecting the egg from the environment. The chain is Chorion protein S36 (Cp36) from Ceratitis capitata (Mediterranean fruit fly).